Here is a 384-residue protein sequence, read N- to C-terminus: Lipid-A-disaccharide synthase (384 aa).

The protein belongs to the LpxB family.

It carries out the reaction a lipid X + a UDP-2-N,3-O-bis[(3R)-3-hydroxyacyl]-alpha-D-glucosamine = a lipid A disaccharide + UDP + H(+). Its pathway is bacterial outer membrane biogenesis; LPS lipid A biosynthesis. Functionally, condensation of UDP-2,3-diacylglucosamine and 2,3-diacylglucosamine-1-phosphate to form lipid A disaccharide, a precursor of lipid A, a phosphorylated glycolipid that anchors the lipopolysaccharide to the outer membrane of the cell. This chain is Lipid-A-disaccharide synthase (lpxB), found in Neisseria meningitidis serogroup B (strain ATCC BAA-335 / MC58).